Consider the following 94-residue polypeptide: Co-chaperonin GroES (94 aa).

Belongs to the GroES chaperonin family. As to quaternary structure, heptamer of 7 subunits arranged in a ring. Interacts with the chaperonin GroEL.

Its subcellular location is the cytoplasm. Functionally, together with the chaperonin GroEL, plays an essential role in assisting protein folding. The GroEL-GroES system forms a nano-cage that allows encapsulation of the non-native substrate proteins and provides a physical environment optimized to promote and accelerate protein folding. GroES binds to the apical surface of the GroEL ring, thereby capping the opening of the GroEL channel. The chain is Co-chaperonin GroES from Thermoanaerobacter pseudethanolicus (strain ATCC 33223 / 39E) (Clostridium thermohydrosulfuricum).